Consider the following 421-residue polypeptide: Threonine--tRNA ligase editing subunit (421 aa).

Belongs to the class-II aminoacyl-tRNA synthetase family. Archaea-specific ThrRS editing domain subfamily. As to quaternary structure, probably interacts with its catalytic subunit.

The protein resides in the cytoplasm. Functionally, freestanding tRNA editing subunit of threonine--tRNA ligase, the catalytic subunit is probably AC Q9YDW0. Deacylates (edits) mischarged L-seryl-tRNA(Thr) in trans; has no activity on correctly charged L-threonyl-tRNA(Thr). Probably does not aminoacylate tRNA(Thr). Deacylates correctly charged glycyl-tRNA(Gly), but not glycyl-tRNA(Gly)(2'-dA76) (the terminal 2'-OH of tRNA adenine 76 has been dehydroxylated) nor the 2'-fluoro tRNA derivative, strongly suggesting the editing function is catalyzed by the 2'-OH of A76 of tRNA(Thr). This Aeropyrum pernix (strain ATCC 700893 / DSM 11879 / JCM 9820 / NBRC 100138 / K1) protein is Threonine--tRNA ligase editing subunit (thrS2).